A 192-amino-acid chain; its full sequence is Recombination protein RecR (192 aa).

The segment at 51–66 (CQTCFHLSADPECEIC) adopts a C4-type zinc-finger fold. One can recognise a Toprim domain in the interval 74 to 168 (GLICVVADSR…PVSRIAYGLP (95 aa)).

Belongs to the RecR family.

In terms of biological role, may play a role in DNA repair. It seems to be involved in an RecBC-independent recombinational process of DNA repair. It may act with RecF and RecO. The polypeptide is Recombination protein RecR (Parasynechococcus marenigrum (strain WH8102)).